Consider the following 408-residue polypeptide: Peptidase T (408 aa).

Residue His78 coordinates Zn(2+). Asp80 is a catalytic residue. A Zn(2+)-binding site is contributed by Asp141. Glu175 serves as the catalytic Proton acceptor. Zn(2+) is bound by residues Glu176, Asp198, and His380.

The protein belongs to the peptidase M20B family. The cofactor is Zn(2+).

It localises to the cytoplasm. It catalyses the reaction Release of the N-terminal residue from a tripeptide.. In terms of biological role, cleaves the N-terminal amino acid of tripeptides. The sequence is that of Peptidase T from Clostridium botulinum (strain Loch Maree / Type A3).